The primary structure comprises 69 residues: Sec-independent protein translocase protein TatA (69 aa).

The helical transmembrane segment at 1 to 21 (MFGLGGQELILILMIILLLFG) threads the bilayer. Residues 49-69 (EFNKAMDDETPKKKDFGPDRE) are disordered.

Belongs to the TatA/E family. In terms of assembly, forms a complex with TatC.

Its subcellular location is the cell inner membrane. Functionally, part of the twin-arginine translocation (Tat) system that transports large folded proteins containing a characteristic twin-arginine motif in their signal peptide across membranes. TatA could form the protein-conducting channel of the Tat system. This is Sec-independent protein translocase protein TatA from Chlorobium luteolum (strain DSM 273 / BCRC 81028 / 2530) (Pelodictyon luteolum).